We begin with the raw amino-acid sequence, 122 residues long: Small ribosomal subunit protein uS13 (122 aa).

The disordered stretch occupies residues 97-122 (PVRGQRTHTNARTRKGPAKAIAGKKK).

This sequence belongs to the universal ribosomal protein uS13 family. Part of the 30S ribosomal subunit. Forms a loose heterodimer with protein S19. Forms two bridges to the 50S subunit in the 70S ribosome.

Located at the top of the head of the 30S subunit, it contacts several helices of the 16S rRNA. In the 70S ribosome it contacts the 23S rRNA (bridge B1a) and protein L5 of the 50S subunit (bridge B1b), connecting the 2 subunits; these bridges are implicated in subunit movement. Contacts the tRNAs in the A and P-sites. This is Small ribosomal subunit protein uS13 from Bartonella tribocorum (strain CIP 105476 / IBS 506).